The following is a 172-amino-acid chain: LSM1-LSM7 complex subunit LSM1 (172 aa).

Over residues 1–17 (MSANSKDRNQSNQDAKR) the composition is skewed to basic and acidic residues. The interval 1-22 (MSANSKDRNQSNQDAKRQQQNF) is disordered. The Sm domain maps to 41–118 (TTTAAIVSSV…VVMLGEVDID (78 aa)).

This sequence belongs to the snRNP Sm proteins family. In terms of assembly, component of the heptameric LSM1-LSM7 complex that forms a seven-membered ring structure with a donut shape. The LSm subunits are arranged in the order LSM1, LSM2, LSM3, LSM6, LSM5, LSM7 and LSM4. Except for LSM1, where a C-terminal helix crosses the ring structure to form additional interactions with LSM3 and LSM6, each subunit interacts only with its two neighboring subunits. The LSM1-LSM7 complex interacts with PAT1; within the complex PAT1 has direct interactions with LSM2 and LSM3. The LSM1-LSM7 complex interacts with XRN1.

Its subcellular location is the nucleus. The protein localises to the cytoplasm. It localises to the P-body. Functionally, component of the cytoplasmic LSM1-LSM7 complex which is involved in mRNA degradation by activating the decapping step. Together with PAT1, the LSM1-LSM7 complex binds to osmotic stress-activated mRNAs to attenuate the osmotic stress response, probably by limiting ribosome access to the mRNA and consequently translation. The polypeptide is LSM1-LSM7 complex subunit LSM1 (LSM1) (Saccharomyces cerevisiae (strain ATCC 204508 / S288c) (Baker's yeast)).